The chain runs to 217 residues: Proteasome subunit beta type-6-B like protein (217 aa).

Positions Met1–Gly16 are cleaved as a propeptide — removed in mature form. Residue Thr17 is the Nucleophile of the active site.

It belongs to the peptidase T1B family. As to quaternary structure, the 26S proteasome consists of a 20S proteasome core and two 19S regulatory subunits. The 20S proteasome core is composed of 28 subunits that are arranged in four stacked rings, resulting in a barrel-shaped structure. The two end rings are each formed by seven alpha subunits, and the two central rings are each formed by seven beta subunits. The catalytic chamber with the active sites is on the inside of the barrel.

It localises to the cytoplasm. The protein resides in the nucleus. It carries out the reaction Cleavage of peptide bonds with very broad specificity.. Functionally, the proteasome is a multicatalytic proteinase complex which is characterized by its ability to cleave peptides with Arg, Phe, Tyr, Leu, and Glu adjacent to the leaving group at neutral or slightly basic pH. The proteasome has an ATP-dependent proteolytic activity. This subunit is involved in antigen processing to generate class I binding peptides. This Salmo salar (Atlantic salmon) protein is Proteasome subunit beta type-6-B like protein (psmb6l-b).